Here is a 329-residue protein sequence, read N- to C-terminus: DNA-directed RNA polymerase subunit alpha (329 aa).

Residues 1 to 235 (MQNSIMDFLR…EQLEAFVDLR (235 aa)) are alpha N-terminal domain (alpha-NTD). The segment at 249–329 (FEPILLRPVD…NWPPSSILDE (81 aa)) is alpha C-terminal domain (alpha-CTD).

The protein belongs to the RNA polymerase alpha chain family. Homodimer. The RNAP catalytic core consists of 2 alpha, 1 beta, 1 beta' and 1 omega subunit. When a sigma factor is associated with the core the holoenzyme is formed, which can initiate transcription.

It carries out the reaction RNA(n) + a ribonucleoside 5'-triphosphate = RNA(n+1) + diphosphate. In terms of biological role, DNA-dependent RNA polymerase catalyzes the transcription of DNA into RNA using the four ribonucleoside triphosphates as substrates. This is DNA-directed RNA polymerase subunit alpha from Buchnera aphidicola subsp. Acyrthosiphon pisum (strain APS) (Acyrthosiphon pisum symbiotic bacterium).